A 61-amino-acid chain; its full sequence is Small ribosomal subunit protein uS14 (61 aa).

Zn(2+) is bound by residues cysteine 24, cysteine 27, cysteine 40, and cysteine 43.

It belongs to the universal ribosomal protein uS14 family. Zinc-binding uS14 subfamily. In terms of assembly, part of the 30S ribosomal subunit. Contacts proteins S3 and S10. Requires Zn(2+) as cofactor.

Binds 16S rRNA, required for the assembly of 30S particles and may also be responsible for determining the conformation of the 16S rRNA at the A site. The sequence is that of Small ribosomal subunit protein uS14 from Geobacillus thermodenitrificans (strain NG80-2).